Reading from the N-terminus, the 260-residue chain is Histidinol-phosphatase (260 aa).

Mg(2+) contacts are provided by Glu-67, Asp-83, Ile-85, and Asp-86. Residue Glu-67 participates in substrate binding. Substrate-binding positions include 85-88 (IDGT), Arg-185, and Asp-213. Mg(2+) is bound at residue Asp-213.

Belongs to the inositol monophosphatase superfamily. The cofactor is Mg(2+).

It carries out the reaction L-histidinol phosphate + H2O = L-histidinol + phosphate. The protein operates within amino-acid biosynthesis; L-histidine biosynthesis; L-histidine from 5-phospho-alpha-D-ribose 1-diphosphate: step 8/9. Functionally, catalyzes the dephosphorylation of histidinol-phosphate to histidinol, the direct precursor of histidine. The chain is Histidinol-phosphatase (hisN) from Mycobacterium tuberculosis (strain ATCC 25618 / H37Rv).